Reading from the N-terminus, the 347-residue chain is Biotin synthase (347 aa).

Residues 40–258 form the Radical SAM core domain; the sequence is AQVQVSTLLS…IAVARIVMPR (219 aa). 3 residues coordinate [4Fe-4S] cluster: Cys55, Cys59, and Cys62. 4 residues coordinate [2Fe-2S] cluster: Cys99, Cys130, Cys190, and Arg262.

It belongs to the radical SAM superfamily. Biotin synthase family. Homodimer. [4Fe-4S] cluster is required as a cofactor. It depends on [2Fe-2S] cluster as a cofactor.

The catalysed reaction is (4R,5S)-dethiobiotin + (sulfur carrier)-SH + 2 reduced [2Fe-2S]-[ferredoxin] + 2 S-adenosyl-L-methionine = (sulfur carrier)-H + biotin + 2 5'-deoxyadenosine + 2 L-methionine + 2 oxidized [2Fe-2S]-[ferredoxin]. It functions in the pathway cofactor biosynthesis; biotin biosynthesis; biotin from 7,8-diaminononanoate: step 2/2. Catalyzes the conversion of dethiobiotin (DTB) to biotin by the insertion of a sulfur atom into dethiobiotin via a radical-based mechanism. The protein is Biotin synthase of Stenotrophomonas maltophilia (strain R551-3).